Consider the following 339-residue polypeptide: D-erythrose-4-phosphate dehydrogenase (339 aa).

11–12 contributes to the NAD(+) binding site; it reads RI. Substrate is bound by residues 158-160, Arg204, 217-218, and Arg240; these read SCT and TK. Residue Cys159 is the Nucleophile of the active site. NAD(+) is bound at residue Asn322.

The protein belongs to the glyceraldehyde-3-phosphate dehydrogenase family. Epd subfamily. In terms of assembly, homotetramer.

It localises to the cytoplasm. The enzyme catalyses D-erythrose 4-phosphate + NAD(+) + H2O = 4-phospho-D-erythronate + NADH + 2 H(+). The protein operates within cofactor biosynthesis; pyridoxine 5'-phosphate biosynthesis; pyridoxine 5'-phosphate from D-erythrose 4-phosphate: step 1/5. Its function is as follows. Catalyzes the NAD-dependent conversion of D-erythrose 4-phosphate to 4-phosphoerythronate. The polypeptide is D-erythrose-4-phosphate dehydrogenase (Aliivibrio fischeri (strain MJ11) (Vibrio fischeri)).